Reading from the N-terminus, the 269-residue chain is uncharacterized protein (269 aa).

The tract at residues 1 to 21 is disordered; the sequence is MAYSSSNSDIEDDSSKSNSNL.

This is an uncharacterized protein from Homo sapiens (Human).